The primary structure comprises 64 residues: Large ribosomal subunit protein bL35 (64 aa).

This sequence belongs to the bacterial ribosomal protein bL35 family.

The polypeptide is Large ribosomal subunit protein bL35 (Chlorobium chlorochromatii (strain CaD3)).